Here is a 179-residue protein sequence, read N- to C-terminus: Large ribosomal subunit protein uL6 (179 aa).

The protein belongs to the universal ribosomal protein uL6 family. As to quaternary structure, part of the 50S ribosomal subunit.

Functionally, this protein binds to the 23S rRNA, and is important in its secondary structure. It is located near the subunit interface in the base of the L7/L12 stalk, and near the tRNA binding site of the peptidyltransferase center. The sequence is that of Large ribosomal subunit protein uL6 from Kineococcus radiotolerans (strain ATCC BAA-149 / DSM 14245 / SRS30216).